Reading from the N-terminus, the 356-residue chain is MILFGSTGSIGVNALKLAALKNIRISALACGDNIALLNEQIARFKPKFVAIKDSKNKHLVKHNRVFIGQEGLEQILTECQDKLLLNAIVGFAGLKSTLKAKELGKNIALANKESLVVAGSFLKGAKFLPVDSEHAALKFLLEGKKNIAKLYITASGGAFYKYKIKDLNQVSLKDALKHPNWNMGAKITIDSATMANKLFEIIEAYHLYDFKEIDALIEPRSLVHAMCEFKNGASTAYFSKADMKLAISDAIFEKQDTPILEAIDFSKIPALKFHPISTKKYPIFKLKNTFLKEPNLGVIINAANEVGVYNFLENKSGFLDITKCIFKALDHFGVPKISSIEEVFEYDFKTREYLRS.

NADPH contacts are provided by threonine 7, glycine 8, serine 9, isoleucine 10, glycine 31, asparagine 33, and asparagine 111. Lysine 112 serves as a coordination point for 1-deoxy-D-xylulose 5-phosphate. Glutamate 113 is an NADPH binding site. Aspartate 131 provides a ligand contact to Mn(2+). 4 residues coordinate 1-deoxy-D-xylulose 5-phosphate: serine 132, glutamate 133, serine 155, and histidine 178. Glutamate 133 provides a ligand contact to Mn(2+). NADPH is bound at residue glycine 184. 1-deoxy-D-xylulose 5-phosphate-binding residues include serine 191, asparagine 196, lysine 197, and glutamate 200. Residue glutamate 200 participates in Mn(2+) binding.

This sequence belongs to the DXR family. Requires Mg(2+) as cofactor. Mn(2+) is required as a cofactor.

The enzyme catalyses 2-C-methyl-D-erythritol 4-phosphate + NADP(+) = 1-deoxy-D-xylulose 5-phosphate + NADPH + H(+). Its pathway is isoprenoid biosynthesis; isopentenyl diphosphate biosynthesis via DXP pathway; isopentenyl diphosphate from 1-deoxy-D-xylulose 5-phosphate: step 1/6. In terms of biological role, catalyzes the NADPH-dependent rearrangement and reduction of 1-deoxy-D-xylulose-5-phosphate (DXP) to 2-C-methyl-D-erythritol 4-phosphate (MEP). The chain is 1-deoxy-D-xylulose 5-phosphate reductoisomerase from Campylobacter jejuni subsp. jejuni serotype O:23/36 (strain 81-176).